A 164-amino-acid chain; its full sequence is MEMTNAQRLILSNQYKMMTMLDPDNAERYRRLQTIIERGYGLQMRELDREFGELTEEVCRTIINVMEMHHALQVSWTNLKDKQDLDERRLTFLGFDAATEARYLGFVRFMVHVEGRYPHFDAGTHGFNAQTKMWEKYTRMLAVWQSCPRQYHLSAVEIAQIINA.

The protein belongs to the UPF0304 family.

This chain is UPF0304 protein ECA3037, found in Pectobacterium atrosepticum (strain SCRI 1043 / ATCC BAA-672) (Erwinia carotovora subsp. atroseptica).